We begin with the raw amino-acid sequence, 345 residues long: Phosphoribosylformylglycinamidine cyclo-ligase (345 aa).

The protein belongs to the AIR synthase family.

It localises to the cytoplasm. It catalyses the reaction 2-formamido-N(1)-(5-O-phospho-beta-D-ribosyl)acetamidine + ATP = 5-amino-1-(5-phospho-beta-D-ribosyl)imidazole + ADP + phosphate + H(+). It functions in the pathway purine metabolism; IMP biosynthesis via de novo pathway; 5-amino-1-(5-phospho-D-ribosyl)imidazole from N(2)-formyl-N(1)-(5-phospho-D-ribosyl)glycinamide: step 2/2. The polypeptide is Phosphoribosylformylglycinamidine cyclo-ligase (Shewanella sediminis (strain HAW-EB3)).